The chain runs to 162 residues: Cadmium metallothionein (162 aa).

Positions 1–2 (MD) are excised as a propeptide.

Functionally, the metallothioneins are involved in the cellular sequestration of toxic metal ions. This chain is Cadmium metallothionein (MTT1), found in Tetrahymena thermophila.